We begin with the raw amino-acid sequence, 148 residues long: Lysozyme C (148 aa).

The N-terminal stretch at 1–18 is a signal peptide; that stretch reads MKAVIILGLVLLSVTVQG. In terms of domain architecture, C-type lysozyme spans 19–148; that stretch reads KIFERCELAR…VSQYVQGCGV (130 aa). Intrachain disulfides connect cysteine 24-cysteine 146, cysteine 48-cysteine 134, cysteine 83-cysteine 99, and cysteine 95-cysteine 113. Catalysis depends on residues glutamate 53 and aspartate 71.

The protein belongs to the glycosyl hydrolase 22 family. As to quaternary structure, monomer.

The catalysed reaction is Hydrolysis of (1-&gt;4)-beta-linkages between N-acetylmuramic acid and N-acetyl-D-glucosamine residues in a peptidoglycan and between N-acetyl-D-glucosamine residues in chitodextrins.. Lysozymes have primarily a bacteriolytic function; those in tissues and body fluids are associated with the monocyte-macrophage system and enhance the activity of immunoagents. This is Lysozyme C (LYZ) from Erythrocebus patas (Red guenon).